Consider the following 3587-residue polypeptide: Tyrocidine synthase 2 (3587 aa).

The interval 466 to 1045 is domain 1 (Proline-activating); sequence AATMHELFSR…IQALAAYVEG (580 aa). Carrier domains follow at residues 972–1047 and 2007–2082; these read APTT…EGGE and APAT…EHSE. An O-(pantetheine 4'-phosphoryl)serine mark is found at S1007 and S2042. Residues 1522–2081 are domain 2 (Phenylalanine-activating); the sequence is EQTAVVFGDK…RDLARLIEHS (560 aa). Residues 2540-3122 form a domain 3 (D-phenylalanine-activating) region; that stretch reads YRADQTIQQL…NSRESEQGVV (583 aa). The tract at residues 3017–3040 is disordered; it reads NDKIDRKALPKPNQEENRTEQYAA. Residues 3018–3035 show a composition bias toward basic and acidic residues; sequence DKIDRKALPKPNQEENRT. In terms of domain architecture, Carrier 3 spans 3040-3114; that stretch reads APQTELEQLL…EAALRVIPNS (75 aa). S3075 is subject to O-(pantetheine 4'-phosphoryl)serine.

It belongs to the ATP-dependent AMP-binding enzyme family. As to quaternary structure, large multienzyme complex of TycA, TycB and TycC. Pantetheine 4'-phosphate serves as cofactor.

The enzyme catalyses L-phenylalanine + ATP + H2O = D-phenylalanine + AMP + diphosphate + H(+). It functions in the pathway antibiotic biosynthesis; tyrocidine biosynthesis. Its function is as follows. Activates the second to fourth amino acids in tyrocidine (in tyrocidine A, Pro, Phe, and D-Phe) and epimerizes the last one. This Brevibacillus parabrevis protein is Tyrocidine synthase 2 (tycB).